The chain runs to 90 residues: Small ribosomal subunit protein uS15 (90 aa).

Belongs to the universal ribosomal protein uS15 family. Part of the 30S ribosomal subunit. Forms a bridge to the 50S subunit in the 70S ribosome, contacting the 23S rRNA.

Its function is as follows. One of the primary rRNA binding proteins, it binds directly to 16S rRNA where it helps nucleate assembly of the platform of the 30S subunit by binding and bridging several RNA helices of the 16S rRNA. Functionally, forms an intersubunit bridge (bridge B4) with the 23S rRNA of the 50S subunit in the ribosome. This Campylobacter fetus subsp. fetus (strain 82-40) protein is Small ribosomal subunit protein uS15.